The sequence spans 2346 residues: Myomegalin (2346 aa).

Coiled coils occupy residues 41-132 (REDI…LVEA), 162-205 (DQYT…LLEE), 238-318 (DSHL…REML), and 350-684 (CSQL…RQYL). A Phosphoserine modification is found at Glu-252. The segment at 698–732 (NQQAEVTPTGRLGKQTDQGSMQIPSRDDSTSLTAK) is disordered. Thr-704 carries the phosphothreonine modification. A compositionally biased stretch (basic and acidic residues) spans 722–732 (SRDDSTSLTAK). Coiled-coil stretches lie at residues 743 to 936 (GDLD…TLAA), 1002 to 1043 (LQEE…SSVS), 1096 to 1124 (SSLQ…EQLV), 1212 to 1240 (STQH…SEAT), 1346 to 1385 (GKSE…LSVT), and 1431 to 1455 (GLQA…LPKN). A disordered region spans residues 1193 to 1214 (DNQSQPRDPGPQSAFSLPGSTQ). Positions 1205–1214 (SAFSLPGSTQ) are enriched in polar residues. One can recognise an Olduvai domain in the interval 1551–1642 (KDHKSEKDQA…EEKKASPSHS (92 aa)). The segment covering 1591-1600 (SLTPSSSHAL) has biased composition (low complexity). Disordered regions lie at residues 1591-1614 (SLTP…SFLS) and 1633-1690 (EEKK…EANQ). A compositionally biased stretch (polar residues) spans 1652–1690 (AVLSSKPSSTSASQGAKAESNSNPISLPTPQNTPKEANQ). Coiled-coil stretches lie at residues 1736–1760 (VVSL…ASTV) and 1840–2077 (GADL…QQLE). Disordered stretches follow at residues 2081–2103 (GKAS…PGNK) and 2127–2156 (VFPS…TSPV). The segment covering 2085–2103 (LSPSSINQNFPASTDPGNK) has biased composition (polar residues). Residues 2273–2312 (ESTERELLELRTKVSKQERLLQSTTEHLKNANQQKESMEQ) are a coiled coil.

In terms of assembly, interacts with PDE4D. Isoform 13 interacts with MAPRE1 and MAPRE3. Isoform 13 forms a pericentrosomal complex with AKAP9, CDK5RAP2 and EB1/MAPRE1; within this complex, may mediate MAPRE1-binding to CDK5RAP2. Interaction of isoform 13 with AKAP9 stabilizes both proteins. Isoform 13 interacts (via N-terminus) with CAMSAP2; this interaction is much stronger in the presence of AKAP9. In complex with AKAP9, Isoform 13 recruits CAMSAP2 to the Golgi apparatus. Isoform 13 interacts with unglycosylated LGALS3BP; this interaction may connect the pericentrosomal complex to the gamma-tubulin ring complex (gamma-TuRC) to promote microtubule assembly and acetylation. As to expression, highly expressed in adult and fetal heart, in skeletal muscle and, to a lower extent, in brain and placenta.

It is found in the golgi apparatus. It localises to the cytoplasm. Its subcellular location is the cytoskeleton. The protein localises to the microtubule organizing center. The protein resides in the centrosome. Functionally, functions as an anchor sequestering components of the cAMP-dependent pathway to Golgi and/or centrosomes. In terms of biological role, participates in microtubule dynamics, promoting microtubule assembly. Depending upon the cell context, may act at the level of the Golgi apparatus or that of the centrosome. In complex with AKAP9, recruits CAMSAP2 to the Golgi apparatus and tethers non-centrosomal minus-end microtubules to the Golgi, an important step for polarized cell movement. In complex with AKAP9, EB1/MAPRE1 and CDK5RAP2, contributes to microtubules nucleation and extension from the centrosome to the cell periphery, a crucial process for directed cell migration, mitotic spindle orientation and cell-cycle progression. The polypeptide is Myomegalin (PDE4DIP) (Homo sapiens (Human)).